The following is a 277-amino-acid chain: 3-methyl-2-oxobutanoate hydroxymethyltransferase (277 aa).

2 residues coordinate Mg(2+): D49 and D88. Residues D49 to S50, D88, and K118 each bind 3-methyl-2-oxobutanoate. E120 is a Mg(2+) binding site. E186 (proton acceptor) is an active-site residue.

Belongs to the PanB family. As to quaternary structure, homodecamer; pentamer of dimers. Requires Mg(2+) as cofactor.

The protein localises to the cytoplasm. The catalysed reaction is 3-methyl-2-oxobutanoate + (6R)-5,10-methylene-5,6,7,8-tetrahydrofolate + H2O = 2-dehydropantoate + (6S)-5,6,7,8-tetrahydrofolate. It participates in cofactor biosynthesis; (R)-pantothenate biosynthesis; (R)-pantoate from 3-methyl-2-oxobutanoate: step 1/2. Catalyzes the reversible reaction in which hydroxymethyl group from 5,10-methylenetetrahydrofolate is transferred onto alpha-ketoisovalerate to form ketopantoate. The protein is 3-methyl-2-oxobutanoate hydroxymethyltransferase of Cereibacter sphaeroides (strain ATCC 17029 / ATH 2.4.9) (Rhodobacter sphaeroides).